Reading from the N-terminus, the 40-residue chain is Photosystem II reaction center protein J (40 aa).

A helical membrane pass occupies residues 8–28 (IPLWLIGTVAGILIIGLLGVF).

The protein belongs to the PsbJ family. As to quaternary structure, PSII is composed of 1 copy each of membrane proteins PsbA, PsbB, PsbC, PsbD, PsbE, PsbF, PsbH, PsbI, PsbJ, PsbK, PsbL, PsbM, PsbT, PsbX, PsbY, PsbZ, Psb30/Ycf12, at least 3 peripheral proteins of the oxygen-evolving complex and a large number of cofactors. It forms dimeric complexes.

Its subcellular location is the plastid. The protein localises to the chloroplast thylakoid membrane. One of the components of the core complex of photosystem II (PSII). PSII is a light-driven water:plastoquinone oxidoreductase that uses light energy to abstract electrons from H(2)O, generating O(2) and a proton gradient subsequently used for ATP formation. It consists of a core antenna complex that captures photons, and an electron transfer chain that converts photonic excitation into a charge separation. This chain is Photosystem II reaction center protein J, found in Nandina domestica (Heavenly bamboo).